The primary structure comprises 276 residues: Shikimate dehydrogenase (NADP(+)) (276 aa).

Residues 18–20 (SKS) and threonine 65 each bind shikimate. Residue lysine 69 is the Proton acceptor of the active site. Glutamate 81 contributes to the NADP(+) binding site. Positions 90 and 106 each coordinate shikimate. Residues 130–134 (GAGGA), 154–159 (NRTSSK), and methionine 217 each bind NADP(+). Residue tyrosine 219 participates in shikimate binding. Position 241 (glycine 241) interacts with NADP(+).

This sequence belongs to the shikimate dehydrogenase family. In terms of assembly, homodimer.

It carries out the reaction shikimate + NADP(+) = 3-dehydroshikimate + NADPH + H(+). It participates in metabolic intermediate biosynthesis; chorismate biosynthesis; chorismate from D-erythrose 4-phosphate and phosphoenolpyruvate: step 4/7. Functionally, involved in the biosynthesis of the chorismate, which leads to the biosynthesis of aromatic amino acids. Catalyzes the reversible NADPH linked reduction of 3-dehydroshikimate (DHSA) to yield shikimate (SA). This chain is Shikimate dehydrogenase (NADP(+)), found in Vibrio atlanticus (strain LGP32) (Vibrio splendidus (strain Mel32)).